A 370-amino-acid polypeptide reads, in one-letter code: MSLHQFLLEPITCHAWNRDRTQIALSPNNHEVHIYKKNGSQWTKAHELKEHNGHITGIDWAPKSDRIVTCGADRNAYVWSQKDGIWKPTLVILRINRAATFVKWSPLENKFAVGSGARLISVCYFESENDWWVSKHIKKPIRSTVLSLDWHPNNVLLAAGSCDFKCRVFSAYIKEVDEKPASTPWGSKMPFGQLMSEFGGSGTGGWVHGVSFSASGSRLAWVSHDSTVSVADASKSVQVSTLRTEFLPLLSVSFVSENSVVAAGHDCCPMLFNYDDRGCLTFVSKLDVPKQSIQRNMSAMERFRNMDKRATTEDRNTALETLHQNSITQVSIYEVDKQDCRKFCTTGIDGAMTIWDFKTLESSIQGLRIM.

6 WD repeats span residues 6–45 (FLLE…WTKA), 50–89 (EHNG…WKPT), 140–179 (PIRS…VDEK), 202–241 (GTGG…QVST), 244–284 (TEFL…TFVS), and 322–365 (LHQN…SSIQ).

Belongs to the WD repeat ARPC1 family. Probable component of the Arp2/3 complex in which it may replace ARPC1B.

The protein localises to the cytoplasm. Its subcellular location is the cytoskeleton. It localises to the nucleus. In terms of biological role, probably functions as a component of the Arp2/3 complex which is involved in regulation of actin polymerization and together with an activating nucleation-promoting factor (NPF) mediates the formation of branched actin networks. In addition to its role in the cytoplasmic cytoskeleton, the Arp2/3 complex also promotes actin polymerization in the nucleus, thereby regulating gene transcription and repair of damaged DNA. The chain is Actin-related protein 2/3 complex subunit 1A (Arpc1a) from Rattus norvegicus (Rat).